Reading from the N-terminus, the 632-residue chain is Golgin subfamily A member 8H (632 aa).

The tract at residues Met-1 to Ser-77 is disordered. Coiled-coil stretches lie at residues Val-110–Arg-201 and Glu-240–Asp-468. 2 stretches are compositionally biased toward basic and acidic residues: residues Lys-352 to Lys-362 and His-427 to Pro-440. Disordered regions lie at residues Lys-352 to Asn-379, Pro-423 to Ser-452, and Leu-496 to Glu-524. Over residues Leu-508–Gly-520 the composition is skewed to gly residues.

Belongs to the GOLGA8 family.

This Homo sapiens (Human) protein is Golgin subfamily A member 8H (GOLGA8H).